Reading from the N-terminus, the 186-residue chain is Lactoylglutathione lyase (186 aa).

In terms of domain architecture, VOC spans 28 to 175 (FMQQTMFRIK…DGYWIELFDR (148 aa)). Residues Gln-31 and Arg-35 each contribute to the substrate site. Gln-31 lines the Zn(2+) pocket. Glu-97 lines the Zn(2+) pocket. Residues Asn-101, Arg-121, His-125, and 155–156 (KM) each bind substrate. Residue His-125 participates in Zn(2+) binding. Glu-171 serves as a coordination point for Zn(2+). The active-site Proton donor/acceptor is Glu-171.

This sequence belongs to the glyoxalase I family. The cofactor is Zn(2+).

The catalysed reaction is (R)-S-lactoylglutathione = methylglyoxal + glutathione. Its pathway is secondary metabolite metabolism; methylglyoxal degradation; (R)-lactate from methylglyoxal: step 1/2. Its function is as follows. Catalyzes the conversion of hemimercaptal, formed from methylglyoxal and glutathione, to S-lactoylglutathione. The protein is Lactoylglutathione lyase of Cicer arietinum (Chickpea).